A 500-amino-acid polypeptide reads, in one-letter code: uncharacterized protein (500 aa).

Low complexity predominate over residues 1 to 13 (MEPSQRSGSFSSI). Residues 1 to 23 (MEPSQRSGSFSSISRRRSRVDSR) form a disordered region. At S9 the chain carries Phosphoserine. 12 consecutive transmembrane segments (helical) span residues 87-107 (VSIA…AVAL), 126-146 (LVIG…LCFA), 156-176 (LYFR…LLYC), 183-203 (WIYL…TFLY), 225-245 (MNIL…GILA), 261-281 (VASW…IFFF), 312-332 (FLLF…NGYQ), 351-371 (GNFI…SSFL), 380-400 (IMLG…VLDA), 408-428 (VYFF…APLI), 445-465 (IVVQ…GGAI), and 471-491 (VGFI…LIFM).

It belongs to the major facilitator superfamily.

It localises to the golgi apparatus. The protein resides in the membrane. This is an uncharacterized protein from Schizosaccharomyces pombe (strain 972 / ATCC 24843) (Fission yeast).